We begin with the raw amino-acid sequence, 980 residues long: SLIT and NTRK-like protein 3 (980 aa).

Residues 1-27 (MMKPSIAEMLHRGRMLWIILLSTIALG) form the signal peptide. Residues 30-655 (TPIPLIEDSE…SPPGGPVPLS (626 aa)) lie on the Extracellular side of the membrane. Asn-69 carries an N-linked (GlcNAc...) asparagine glycan. 6 LRR repeats span residues 79–100 (RPFKLYLQRNSMRRLYTNSFLH), 103–124 (NAVSINLGNNALQDIQTGAFNG), 127–148 (ILKRLYLHENKLDVFRNDTFLG), 151–172 (SLEYLQADYNVIKRIESGAFRN), 175–196 (KLRVLILNDNLIPVLPTNLFKA), and 198–219 (SLTHLDLRGNRLKVLFYRGMLD). Residues 233-284 (NPWNCTCEIVQLKSWLERIPYTALVGDITCETPFHFHGKDLREIKKTELCPL) enclose the LRRCT 1 domain. The tract at residues 326–361 (EYKSSNKQPKPTKQPRTPRPPSTSQALYPGPNQPPI) is disordered. Positions 365–407 (QTRPPIPIICPTGCTCNLHINDLGLTVNCKERGFNNISELLPR) constitute an LRRNT domain. LRR repeat units lie at residues 410–431 (NAKKLYLSSNLIQKIYRSDFWN), 434–455 (SLDLLHLGNNRISYVQDGAFIN), 458–479 (NLKSLFLNGNDIEKLTPGMFRG), 482–503 (SLHYLYFEFNVIREIQPAAFSL), 506–527 (NLKLLFLNNNLLRTLPTDAFAG), and 529–550 (SLARLNLRKNYFLYLPVAGVLE). Residues 563–614 (NPWDCTCDLVPFKQWIETISSVSVVGDVLCRTPENLTHRDVRTIELEVLCPE) enclose the LRRCT 2 domain. Asn-597 carries an N-linked (GlcNAc...) asparagine glycan. The tract at residues 622-644 (GPSPPQPGDYHPNGGPTSASPYE) is disordered. Residues 656–676 (VLILSLLVLFFSAVFVAAGLF) traverse the membrane as a helical segment. The Cytoplasmic segment spans residues 677-980 (AYVLRRRRKK…EVLEKTAYRF (304 aa)). 2 disordered regions span residues 709-735 (LFEDSGGNSGGSGGGGRPTLSSPEKAP) and 762-785 (EEEVAASAAQDTGATDRGGPGTQP). The span at 715 to 725 (GNSGGSGGGGR) shows a compositional bias: gly residues.

It belongs to the SLITRK family. Broadly expressed in embryonic brain with highest expression in cortical plate, pyramidal cell layer of the hippocampus, thalamus and hypothalamus.

The protein localises to the membrane. Its function is as follows. Suppresses neurite outgrowth. The chain is SLIT and NTRK-like protein 3 (Slitrk3) from Mus musculus (Mouse).